A 69-amino-acid polypeptide reads, in one-letter code: VLIIAVLFLTACQLTTAETYSRGRQKHRARRSTDKNSKWTRECTHSGGACNSHDQCCNAFCDTATRTCV.

Residues 1–17 (VLIIAVLFLTACQLTTA) form the signal peptide. Residues 18-41 (ETYSRGRQKHRARRSTDKNSKWTR) constitute a propeptide that is removed on maturation. 3 disulfides stabilise this stretch: C43/C57, C50/C61, and C56/C68.

It belongs to the conotoxin O1 superfamily. Expressed by the venom duct.

It localises to the secreted. This is Conotoxin Eb6.1 (E1) from Conus ebraeus (Hebrew cone).